A 146-amino-acid chain; its full sequence is MTEQFWQQKKLEEMTEQEWESLCDGCGKCCLHKLMDEDTDEVYYTNVACSWLNSKTCACKDYPKRFTSGEECLKLSRENIAEFNWLPLTCAYRLLAEDKPLPEWHPLITGSKSAMHAAGESVRNKVVYAIDVKNWEDHITNHPHRS.

The protein belongs to the UPF0260 family.

The chain is UPF0260 protein VF_1660 from Aliivibrio fischeri (strain ATCC 700601 / ES114) (Vibrio fischeri).